Reading from the N-terminus, the 883-residue chain is Histidine--tRNA ligase, cytoplasmic (883 aa).

Belongs to the class-II aminoacyl-tRNA synthetase family.

It localises to the cytoplasm. The protein localises to the cytosol. The catalysed reaction is tRNA(His) + L-histidine + ATP = L-histidyl-tRNA(His) + AMP + diphosphate + H(+). In Arabidopsis thaliana (Mouse-ear cress), this protein is Histidine--tRNA ligase, cytoplasmic.